A 128-amino-acid chain; its full sequence is Large ribosomal subunit protein bL12c (128 aa).

The interval 103–128 is disordered; that stretch reads QEGLGKDAAEDAKKQIEDAGGKVSLT. The segment covering 106–122 has biased composition (basic and acidic residues); it reads LGKDAAEDAKKQIEDAG.

The protein belongs to the bacterial ribosomal protein bL12 family. As to quaternary structure, homodimer. Part of the ribosomal stalk of the 50S ribosomal subunit. Forms a multimeric L10(L12)X complex, where L10 forms an elongated spine to which 2 to 4 L12 dimers bind in a sequential fashion. Binds GTP-bound translation factors.

The protein resides in the plastid. Its subcellular location is the chloroplast. Its function is as follows. Forms part of the ribosomal stalk which helps the ribosome interact with GTP-bound translation factors. Is thus essential for accurate translation. The protein is Large ribosomal subunit protein bL12c of Thalassiosira pseudonana (Marine diatom).